The sequence spans 285 residues: Glutamate racemase (285 aa).

Residues 28 to 29 (DS) and 60 to 61 (YG) each bind substrate. Catalysis depends on Cys92, which acts as the Proton donor/acceptor. 93–94 (NT) is a binding site for substrate. The active-site Proton donor/acceptor is Cys204. A substrate-binding site is contributed by 205–206 (TH).

It belongs to the aspartate/glutamate racemases family.

The enzyme catalyses L-glutamate = D-glutamate. Its pathway is cell wall biogenesis; peptidoglycan biosynthesis. Provides the (R)-glutamate required for cell wall biosynthesis. The polypeptide is Glutamate racemase (Escherichia coli O9:H4 (strain HS)).